A 59-amino-acid polypeptide reads, in one-letter code: UPF0391 membrane protein lpg2521 (59 aa).

The next 2 helical transmembrane spans lie at 5–25 and 30–50; these read ALIFFIIAIIAAAFGFGGIAV and IAKILFFLFLVMFVIFLIMGL.

The protein belongs to the UPF0391 family.

The protein localises to the cell membrane. This chain is UPF0391 membrane protein lpg2521, found in Legionella pneumophila subsp. pneumophila (strain Philadelphia 1 / ATCC 33152 / DSM 7513).